A 92-amino-acid chain; its full sequence is Conotoxin Mr15.2 (92 aa).

A signal peptide spans 1–20 (MSTLKMMLLILLLLLPMATF). Positions 21 to 53 (DSDGQAIPGGGIPSAVNSRVGGDEKSGRSLEKR) are excised as a propeptide. Positions 30–49 (GGIPSAVNSRVGGDEKSGRS) are disordered.

Belongs to the conotoxin N superfamily. Contains 4 disulfide bonds. Expressed by the venom duct.

The protein localises to the secreted. The sequence is that of Conotoxin Mr15.2 from Conus marmoreus (Marble cone).